We begin with the raw amino-acid sequence, 645 residues long: 1,4-alpha-glucan branching enzyme GlgB (645 aa).

The active-site Nucleophile is the Asp-309. Glu-352 (proton donor) is an active-site residue. Positions 619 to 645 (VKTRKGSKKQDGSKTKVRSNVTSRGKR) are disordered. The span at 636-645 (RSNVTSRGKR) shows a compositional bias: polar residues.

This sequence belongs to the glycosyl hydrolase 13 family. GlgB subfamily. Monomer.

It carries out the reaction Transfers a segment of a (1-&gt;4)-alpha-D-glucan chain to a primary hydroxy group in a similar glucan chain.. It functions in the pathway glycan biosynthesis; glycogen biosynthesis. Its function is as follows. Catalyzes the formation of the alpha-1,6-glucosidic linkages in glycogen by scission of a 1,4-alpha-linked oligosaccharide from growing alpha-1,4-glucan chains and the subsequent attachment of the oligosaccharide to the alpha-1,6 position. In Bacillus cereus (strain AH187), this protein is 1,4-alpha-glucan branching enzyme GlgB.